The sequence spans 458 residues: Phosphoglucosamine mutase (458 aa).

Ser102 functions as the Phosphoserine intermediate in the catalytic mechanism. Residues Ser102, Asp252, Asp254, and Asp256 each coordinate Mg(2+). Residue Ser102 is modified to Phosphoserine.

This sequence belongs to the phosphohexose mutase family. The cofactor is Mg(2+). Post-translationally, activated by phosphorylation.

It catalyses the reaction alpha-D-glucosamine 1-phosphate = D-glucosamine 6-phosphate. Functionally, catalyzes the conversion of glucosamine-6-phosphate to glucosamine-1-phosphate. The polypeptide is Phosphoglucosamine mutase (Anaeromyxobacter dehalogenans (strain 2CP-C)).